The following is a 156-amino-acid chain: Arginine repressor (156 aa).

The protein belongs to the ArgR family.

It is found in the cytoplasm. Its pathway is amino-acid biosynthesis; L-arginine biosynthesis [regulation]. Functionally, regulates arginine biosynthesis genes. The chain is Arginine repressor from Aliivibrio fischeri (strain ATCC 700601 / ES114) (Vibrio fischeri).